The chain runs to 73 residues: Disintegrin mojastin-2 (73 aa).

Residues 1-73 enclose the Disintegrin domain; sequence EAGEECDCGS…ADCPRNGLYG (73 aa). 6 cysteine pairs are disulfide-bonded: Cys6–Cys21, Cys8–Cys16, Cys15–Cys38, Cys29–Cys35, Cys34–Cys59, and Cys47–Cys66. Positions 51-53 match the Cell attachment site motif; it reads RGD.

The protein belongs to the venom metalloproteinase (M12B) family. P-II subfamily. P-IIa sub-subfamily. As to quaternary structure, monomer (disintegrin). Expressed by the venom gland.

Its subcellular location is the secreted. Inhibits the three processes involved in platelet function (adhesion, activation and aggregation). It inhibits platelet adhesion to fibronectin with an IC(50) of 58.6 nM. It inhibits ATP release from platelet induced by ADP with an IC(50) of 19.5 nM on platelet-rich plasma, probably by binding to ADP receptors (P2RY1 and P2RY12). Finally, it inhibits ADP-induced platelet aggregation with IC(50) of 44.7 nM on platelet-rich plasma and 19.3 nM on whole blood, probably by binding to alpha-IIb/beta-3 (ITGA2B/ITGB3). Functionally, inhibits ADP-induced platelet aggregation (IC(50) = 13.8 nM) probably by binding to alpha-IIb/beta-3 (ITGA2B/ITGB3) located on the platelet surface. The protein is Disintegrin mojastin-2 of Crotalus scutulatus scutulatus (Mojave rattlesnake).